The following is a 232-amino-acid chain: Ribose-5-phosphate isomerase A (232 aa).

Substrate contacts are provided by residues 28-31, 83-86, and 96-99; these read TGST, DGAD, and KGGG. Glutamate 105 acts as the Proton acceptor in catalysis. Position 123 (lysine 123) interacts with substrate.

It belongs to the ribose 5-phosphate isomerase family. As to quaternary structure, homodimer.

It catalyses the reaction aldehydo-D-ribose 5-phosphate = D-ribulose 5-phosphate. It functions in the pathway carbohydrate degradation; pentose phosphate pathway; D-ribose 5-phosphate from D-ribulose 5-phosphate (non-oxidative stage): step 1/1. Its function is as follows. Catalyzes the reversible conversion of ribose-5-phosphate to ribulose 5-phosphate. The sequence is that of Ribose-5-phosphate isomerase A from Rhizobium etli (strain ATCC 51251 / DSM 11541 / JCM 21823 / NBRC 15573 / CFN 42).